We begin with the raw amino-acid sequence, 282 residues long: Nucleotide-binding protein XCC2806 (282 aa).

Position 5–12 (5–12 (GLSGSGKS)) interacts with ATP. 57-60 (DVRS) is a GTP binding site.

This sequence belongs to the RapZ-like family.

In terms of biological role, displays ATPase and GTPase activities. This is Nucleotide-binding protein XCC2806 from Xanthomonas campestris pv. campestris (strain ATCC 33913 / DSM 3586 / NCPPB 528 / LMG 568 / P 25).